The primary structure comprises 114 residues: Protein lin-52 homolog (114 aa).

Phosphoserine occurs at positions 26 and 51.

It belongs to the lin-52 family. As to quaternary structure, component of the DREAM complex (also named LINC complex) at least composed of E2F4, E2F5, LIN9, LIN37, LIN52, LIN54, MYBL1, MYBL2, RBL1, RBL2, RBBP4, TFDP1 and TFDP2. The complex exists in quiescent cells where it represses cell cycle-dependent genes. It dissociates in S phase when LIN9, LIN37, LIN52 and LIN54 form a subcomplex that binds to MYBL2.

In Pongo abelii (Sumatran orangutan), this protein is Protein lin-52 homolog (LIN52).